Here is a 201-residue protein sequence, read N- to C-terminus: Charged multivesicular body protein 6 (201 aa).

G2 carries N-myristoyl glycine lipidation. A coiled-coil region spans residues 10 to 145 (QSRVTEQDKA…YQRQIDELLA (136 aa)). S119 carries the phosphoserine modification. At T130 the chain carries Phosphothreonine. The short motif at 168-179 (IELPEVPSEPLP) is the Type-2 MIT-interacting motif element. The interaction with VPS4A stretch occupies residues 170–181 (LPEVPSEPLPEK).

This sequence belongs to the SNF7 family. As to quaternary structure, probable core component of the endosomal sorting required for transport complex III (ESCRT-III). ESCRT-III components are thought to multimerize to form a flat lattice on the perimeter membrane of the endosome. Several assembly forms of ESCRT-III may exist that interact and act sequentially. Interacts with VPS4A; the interaction is direct. Interacts with VPS4B; the interaction is direct. Interacts with CHMP4A, CHMP4B and CHMP4C. Interacts with SNF8, VPS25 and VPS36. In terms of processing, ISGylated in a CHMP5-dependent manner. Isgylation weakens its interaction with VPS4A. Ubiquitously expressed.

The protein localises to the endomembrane system. It localises to the endosome membrane. The protein resides in the late endosome membrane. Its subcellular location is the membrane. In terms of biological role, probable core component of the endosomal sorting required for transport complex III (ESCRT-III) which is involved in multivesicular bodies (MVBs) formation and sorting of endosomal cargo proteins into MVBs. MVBs contain intraluminal vesicles (ILVs) that are generated by invagination and scission from the limiting membrane of the endosome and mostly are delivered to lysosomes enabling degradation of membrane proteins, such as stimulated growth factor receptors, lysosomal enzymes and lipids. The MVB pathway appears to require the sequential function of ESCRT-O, -I,-II and -III complexes. ESCRT-III proteins mostly dissociate from the invaginating membrane before the ILV is released. The ESCRT machinery also functions in topologically equivalent membrane fission events, such as the terminal stages of cytokinesis and the budding of enveloped viruses (HIV-1 and other lentiviruses). ESCRT-III proteins are believed to mediate the necessary vesicle extrusion and/or membrane fission activities, possibly in conjunction with the AAA ATPase VPS4. In the ESCRT-III complex, it probably serves as an acceptor for the ESCRT-II complex on endosomal membranes. In Homo sapiens (Human), this protein is Charged multivesicular body protein 6 (CHMP6).